The following is a 1135-amino-acid chain: Putative beta-hexosaminidase (1135 aa).

Positions 1-23 are cleaved as a signal peptide; that stretch reads MKWVKSGVGILGILLTICHAVTS. Disordered regions lie at residues 970–1082 and 1107–1135; these read AHPP…LPGQ and QMRG…QQAG. The span at 986–1003 shows a compositional bias: pro residues; that stretch reads NMPPPFPPRPPFGPPMLP. Low complexity-rich tracts occupy residues 1004–1026 and 1043–1073; these read PGQM…TALG and TGQA…LPGQ.

The protein belongs to the glycosyl hydrolase 20 family. In terms of tissue distribution, prismatic layer of shell (at protein level). Expressed primarily in the mantle with highest level in the mantle edge and lower level in the mantle pallium.

The protein resides in the secreted. The catalysed reaction is Hydrolysis of terminal non-reducing N-acetyl-D-hexosamine residues in N-acetyl-beta-D-hexosaminides.. It participates in glycan degradation; chitin degradation. This chain is Putative beta-hexosaminidase, found in Margaritifera margaritifera (Freshwater pearl mussel).